A 514-amino-acid chain; its full sequence is Maturase K (514 aa).

This sequence belongs to the intron maturase 2 family. MatK subfamily.

It localises to the plastid. The protein resides in the chloroplast. Usually encoded in the trnK tRNA gene intron. Probably assists in splicing its own and other chloroplast group II introns. This is Maturase K from Erythronium grandiflorum (Yellow avalanche-lily).